The following is a 294-amino-acid chain: Cytidine deaminase (294 aa).

CMP/dCMP-type deaminase domains follow at residues 48–168 and 186–294; these read DEDA…FGPK and LTGD…VLLA. Substrate is bound at residue 89 to 91; sequence NME. Position 102 (His-102) interacts with Zn(2+). The active-site Proton donor is Glu-104. Residues Cys-129 and Cys-132 each coordinate Zn(2+).

It belongs to the cytidine and deoxycytidylate deaminase family. As to quaternary structure, homodimer. Requires Zn(2+) as cofactor.

The catalysed reaction is cytidine + H2O + H(+) = uridine + NH4(+). It catalyses the reaction 2'-deoxycytidine + H2O + H(+) = 2'-deoxyuridine + NH4(+). In terms of biological role, this enzyme scavenges exogenous and endogenous cytidine and 2'-deoxycytidine for UMP synthesis. This Escherichia coli O157:H7 protein is Cytidine deaminase.